The chain runs to 327 residues: Olfactory receptor 6A2 (327 aa).

Over 1-26 (MEWRNHSGRVSEFVLLGFPAPAPLQV) the chain is Extracellular. N-linked (GlcNAc...) asparagine glycosylation occurs at asparagine 5. The helical transmembrane segment at 27-47 (LLFALLLLAYVLVLTENTLII) threads the bilayer. At 48–55 (MAIRNHST) the chain is on the cytoplasmic side. The chain crosses the membrane as a helical span at residues 56 to 76 (LHKPMYFFLANMSFLEIWYVT). Residues 77–104 (VTIPKMLAGFVGSKQDHGQLISFEGCMT) lie on the Extracellular side of the membrane. Cysteine 102 and cysteine 194 are disulfide-bonded. Residues 105–125 (QLYFFLGLGCTECVLLAVMAY) traverse the membrane as a helical segment. The Cytoplasmic segment spans residues 126–144 (DRYMAICYPLHYPVIVSGR). Residues 145–165 (LCVQMAAGSWAGGFGISMVKV) traverse the membrane as a helical segment. The Extracellular portion of the chain corresponds to 166 to 201 (FLISGLSYCGPNIINHFFCDVSPLLNLSCTDMSTAE). A glycan (N-linked (GlcNAc...) asparagine) is linked at asparagine 191. Residues 202–222 (LTDFILAIFILLGPLSVTGAS) form a helical membrane-spanning segment. At 223-242 (YVAITGAVMHIPSAAGRYKA) the chain is on the cytoplasmic side. Residues 243–263 (FSTCASHLTVVIIFYAASIFI) form a helical membrane-spanning segment. The Extracellular portion of the chain corresponds to 264-276 (YARPKALSAFDTN). A helical membrane pass occupies residues 277–297 (KLVSVLYAVIVPLLNPIIYCL). Over 298–327 (RNQEVKRALCCTLHLYQHQDPDPKKASRNV) the chain is Cytoplasmic.

The protein belongs to the G-protein coupled receptor 1 family.

The protein resides in the cell membrane. Odorant receptor. This Homo sapiens (Human) protein is Olfactory receptor 6A2 (OR6A2).